The primary structure comprises 122 residues: Fluoride-specific ion channel FluC (122 aa).

4 consecutive transmembrane segments (helical) span residues 4–24 (ILLI…VSGI), 36–56 (LIVN…SLFG), 65–85 (FIIT…YESF), and 100–120 (ILLN…ASMF). Gly-72 and Thr-75 together coordinate Na(+).

The protein belongs to the fluoride channel Fluc/FEX (TC 1.A.43) family.

It is found in the cell membrane. The catalysed reaction is fluoride(in) = fluoride(out). Its activity is regulated as follows. Na(+) is not transported, but it plays an essential structural role and its presence is essential for fluoride channel function. Its function is as follows. Fluoride-specific ion channel. Important for reducing fluoride concentration in the cell, thus reducing its toxicity. This Methanococcus maripaludis (strain DSM 14266 / JCM 13030 / NBRC 101832 / S2 / LL) protein is Fluoride-specific ion channel FluC.